We begin with the raw amino-acid sequence, 399 residues long: Phosphoglycerate kinase (399 aa).

Substrate-binding positions include 21–23, Arg-36, 59–62, Arg-120, and Arg-158; these read DFN and HLGR. Residues Lys-209, Gly-297, Glu-328, and 355 to 358 each bind ATP; that span reads GGDS.

Belongs to the phosphoglycerate kinase family. As to quaternary structure, monomer.

The protein localises to the cytoplasm. It catalyses the reaction (2R)-3-phosphoglycerate + ATP = (2R)-3-phospho-glyceroyl phosphate + ADP. The protein operates within carbohydrate degradation; glycolysis; pyruvate from D-glyceraldehyde 3-phosphate: step 2/5. This chain is Phosphoglycerate kinase, found in Streptococcus thermophilus (strain CNRZ 1066).